Reading from the N-terminus, the 384-residue chain is Sphingosine 1-phosphate receptor 4 (384 aa).

At 1-50 (MNATGTPVAPESCQQLAAGGHSRLIVLHYNHSGRLAGRGGPEDGGLGALR) the chain is on the extracellular side. N-linked (GlcNAc...) asparagine glycans are attached at residues Asn2 and Asn30. The helical transmembrane segment at 51-71 (GLSVAASCLVVLENLLVLAAI) threads the bilayer. Topologically, residues 72–84 (TSHMRSRRWVYYC) are cytoplasmic. A helical membrane pass occupies residues 85–105 (LVNITLSDLLTGAAYLANVLL). Residues 106-117 (SGARTFRLAPAQ) lie on the Extracellular side of the membrane. The chain crosses the membrane as a helical span at residues 118–138 (WFLREGLLFTALAASTFSLLF). The Cytoplasmic portion of the chain corresponds to 139–161 (TAGERFATMVRPVAESGATKTSR). Residues 162-182 (VYGFIGLCWLLAALLGMLPLL) form a helical membrane-spanning segment. Residues 183-206 (GWNCLCAFDRCSSLLPLYSKRYIL) are Extracellular-facing. The chain crosses the membrane as a helical span at residues 207–227 (FCLVIFAGVLATIMGLYGAIF). At 228 to 252 (RLVQASGQKAPRPAARRKARRLLKT) the chain is on the cytoplasmic side. A helical membrane pass occupies residues 253–273 (VLMILLAFLVCWGPLFGLLLA). The Extracellular portion of the chain corresponds to 274-288 (DVFGSNLWAQEYLRG). A helical transmembrane segment spans residues 289-309 (MDWILALAVLNSAVNPIIYSF). The Cytoplasmic segment spans residues 310 to 384 (RSREVCRAVL…LSSISSVRSI (75 aa)). Cys323 is lipidated: S-palmitoyl cysteine.

Belongs to the G-protein coupled receptor 1 family. As to expression, specifically expressed in fetal and adult lymphoid and hematopoietic tissue as well as in lung. Considerable level of expression in adult and fetal spleen as well as adult peripheral leukocytes and lung. Lower expression in adult thymus, lymph node, bone marrow, and appendix as well as in fetal liver, thymus, and lung.

The protein localises to the cell membrane. In terms of biological role, receptor for the lysosphingolipid sphingosine 1-phosphate (S1P). S1P is a bioactive lysophospholipid that elicits diverse physiological effect on most types of cells and tissues. May be involved in cell migration processes that are specific for lymphocytes. The polypeptide is Sphingosine 1-phosphate receptor 4 (S1PR4) (Homo sapiens (Human)).